The following is a 1380-amino-acid chain: DNA-directed RNA polymerase subunit beta (1380 aa).

Belongs to the RNA polymerase beta chain family. In terms of assembly, the RNAP catalytic core consists of 2 alpha, 1 beta, 1 beta' and 1 omega subunit. When a sigma factor is associated with the core the holoenzyme is formed, which can initiate transcription.

It catalyses the reaction RNA(n) + a ribonucleoside 5'-triphosphate = RNA(n+1) + diphosphate. In terms of biological role, DNA-dependent RNA polymerase catalyzes the transcription of DNA into RNA using the four ribonucleoside triphosphates as substrates. The chain is DNA-directed RNA polymerase subunit beta from Sinorhizobium fredii (strain NBRC 101917 / NGR234).